The primary structure comprises 186 residues: Calcium load-activated calcium channel homolog (186 aa).

The Cytoplasmic portion of the chain corresponds to 1–6; the sequence is MLGDCL. Residues 7-27 form a helical membrane-spanning segment; it reads LIIAIAFGTALAGEGITWLLV. The Lumenal portion of the chain corresponds to 28-87; it reads YRSDHYKRLKADMDKKTKKLEKKKQEVGDTNDKNIKRKLEREEERLKATNRDMSMFKMKS. Residues 30-86 are a coiled coil; that stretch reads SDHYKRLKADMDKKTKKLEKKKQEVGDTNDKNIKRKLEREEERLKATNRDMSMFKMK. Residues 88 to 108 form a helical membrane-spanning segment; it reads MFAIGLAFTALLSTFNSIFEG. At 109-134 the chain is on the cytoplasmic side; the sequence is RVVAKLPFYPIGFIQGLSHRNLIGED. An intramembrane region (pore-forming) is located at residues 135 to 151; that stretch reads MTDCSFIFLYILCTMTV. Residues 152-186 lie on the Cytoplasmic side of the membrane; sequence RQNLQKILGFAPSRAMARQQSSPWAPPNSQMNYLR.

It belongs to the TMCO1 family. Homodimer and homotetramer.

The protein localises to the endoplasmic reticulum membrane. Its function is as follows. Calcium-selective channel required to prevent calcium stores from overfilling. The sequence is that of Calcium load-activated calcium channel homolog from Caenorhabditis elegans.